An 873-amino-acid polypeptide reads, in one-letter code: Leucine--tRNA ligase (873 aa).

Positions 42-52 (PYPSGKLHMGH) match the 'HIGH' region motif. A disordered region spans residues 624–643 (PVEIGGTEKMSKSKNNGVDP). The short motif at 632–636 (KMSKS) is the 'KMSKS' region element. ATP is bound at residue K635.

The protein belongs to the class-I aminoacyl-tRNA synthetase family.

Its subcellular location is the cytoplasm. It carries out the reaction tRNA(Leu) + L-leucine + ATP = L-leucyl-tRNA(Leu) + AMP + diphosphate. This Pseudomonas paraeruginosa (strain DSM 24068 / PA7) (Pseudomonas aeruginosa (strain PA7)) protein is Leucine--tRNA ligase.